Here is a 558-residue protein sequence, read N- to C-terminus: Galactoside 2-alpha-L-fucosyltransferase (558 aa).

Residues 1–43 (MDQNSYRRRSSPIRTTTGGSKSVNFSELLQMKYLSSGTMKLTR) are Cytoplasmic-facing. Residues 44–64 (TFTTCLIVFSVLVAFSMIFHQ) traverse the membrane as a helical; Signal-anchor for type II membrane protein segment. At 65-558 (HPSDSNRIMG…EDISWGLKLV (494 aa)) the chain is on the lumenal side. Residues Asn-88 and Asn-504 are each glycosylated (N-linked (GlcNAc...) asparagine).

The protein belongs to the glycosyltransferase 37 family. As to quaternary structure, homodimer. Interacts with MUR3, XLT2, XXT2 and XXT5. Expressed in roots, stems, leaves, flowers, siliques and seedlings.

It is found in the golgi apparatus. Its subcellular location is the golgi stack membrane. The protein localises to the golgi apparatus membrane. Its function is as follows. Involved in cell wall biosynthesis. Is both necessary and sufficient for the addition of the terminal fucosyl residue on xyloglucan side chains, but is not involved in the fucosylation of other cell wall components. Associates with other xyloglucan-synthesizing enzymes to form multiprotein complexes for xyloglucan synthesis in the Golgi. This chain is Galactoside 2-alpha-L-fucosyltransferase (FUT1), found in Arabidopsis thaliana (Mouse-ear cress).